The sequence spans 213 residues: MEAIWLYQFRLIVIGDSTVGKSCLIRRFTEGRFAQVSDPTVGVDFFSRLVEIEPGKRIKLQIWDTAGQERFRSITRAYYRNSVGGLLLFDITNRRSFQNVHEWLEETKVHVQPYQIVFVLVGHKCDLDTQRQVTRHEAEKLAAAYGMKYIETSARDAINVEKAFTDLTRDIYELVKRGEITIQEGWEGVKSGFVPNVVHSSEEVVKSERRCLC.

GTP is bound by residues serine 17, glycine 20, lysine 21, serine 22, cysteine 23, serine 37, and threonine 40. Position 22 (serine 22) interacts with Mg(2+). Residues 35–43 (QVSDPTVGV) are switch-I. Residues threonine 40 and aspartate 64 each coordinate Mg(2+). Glycine 67, histidine 123, lysine 124, aspartate 126, alanine 154, and arginine 155 together coordinate GTP. Residues 67–83 (GQERFRSITRAYYRNSV) form a switch-II region. At serine 201 the chain carries Phosphoserine. 2 S-geranylgeranyl cysteine lipidation sites follow: cysteine 211 and cysteine 213. Residue cysteine 213 is modified to Cysteine methyl ester.

It belongs to the small GTPase superfamily. Rab family. In terms of assembly, interacts (GDP-bound) with C9orf72; C9orf72 in complex with SMCR8 acts as a GEF for RAB39B. Interacts (in GTP-bound form) with PICK1 (via PDZ domain); a PICK1 homodimer may allow simultaneous association of RAB39B and GRIA2 to PICK1 which is involved in GRIA2 trafficking. Interacts with isoform c of RASSF1; the interaction is strong. Interacts with isoform a of RASSF1; the interaction is weak. Interacts with the DLG4/PSD-95. Interacts (GTP-bound) with HOPS complex components VPS39 and VPS41. Mg(2+) serves as cofactor. In terms of tissue distribution, highly expressed in the brain.

The protein resides in the cell membrane. It is found in the cytoplasmic vesicle membrane. The protein localises to the golgi apparatus. Its subcellular location is the cytoplasmic vesicle. It localises to the autophagosome membrane. The protein resides in the autolysosome membrane. It catalyses the reaction GTP + H2O = GDP + phosphate + H(+). With respect to regulation, regulated by guanine nucleotide exchange factors (GEFs) including C9orf72-SMCR8 complex, which promote the exchange of bound GDP for free GTP. Regulated by GTPase activating proteins (GAPs) which increase the GTP hydrolysis activity. Inhibited by GDP dissociation inhibitors (GDIs). Functionally, the small GTPases Rab are key regulators of intracellular membrane trafficking, from the formation of transport vesicles to their fusion with membranes. Rabs cycle between an inactive GDP-bound form and an active GTP-bound form that is able to recruit to membranes different sets of downstream effectors directly responsible for vesicle formation, movement, tethering and fusion. RAB39B is involved in autophagy and may function in autophagosome formation. Binds downstream effector PICK1 to ensure selectively GRIA2 exit from the endoplasmic reticulum to the Golgi and to regulate AMPAR composition at the post-synapses and thus synaptic transmission. May regulate the homeostasis of SNCA/alpha-synuclein. In Homo sapiens (Human), this protein is Ras-related protein Rab-39B.